Reading from the N-terminus, the 636-residue chain is uncharacterized protein (636 aa).

Disordered regions lie at residues methionine 1–glycine 22 and serine 81–asparagine 107. The Cytoplasmic portion of the chain corresponds to methionine 1–glutamine 170. Residues leucine 171 to leucine 191 form a helical; Signal-anchor for type II membrane protein membrane-spanning segment. Topologically, residues threonine 192–cysteine 636 are lumenal. In terms of domain architecture, GH16 spans leucine 218–aspartate 587. N-linked (GlcNAc...) asparagine glycans are attached at residues asparagine 291, asparagine 378, asparagine 429, asparagine 464, asparagine 489, and asparagine 616.

It belongs to the SKN1/KRE6 family.

It is found in the endoplasmic reticulum membrane. In terms of biological role, required for synthesis of the major beta-glucans of the yeast cell wall. This is an uncharacterized protein from Schizosaccharomyces pombe (strain 972 / ATCC 24843) (Fission yeast).